An 882-amino-acid polypeptide reads, in one-letter code: Protein O-mannosyl-transferase TMTC1 (882 aa).

At 1–20 (MVVTTSARGGGGDRTPSRRR) the chain is on the cytoplasmic side. The segment at 1–20 (MVVTTSARGGGGDRTPSRRR) is disordered. Residues 21-41 (GCGLAPAGAAALLAGASCLCY) traverse the membrane as a helical segment. At 42 to 110 (GRSLQGEFVH…KLNIFLTGMN (69 aa)) the chain is on the extracellular side. Residue Asn86 is glycosylated (N-linked (GlcNAc...) asparagine). The chain crosses the membrane as a helical span at residues 111–131 (PFYFHAVNIILHCLVTLVLMY). Over 132-137 (TCDKTV) the chain is Cytoplasmic. The chain crosses the membrane as a helical span at residues 138-157 (FKNRGLAFVTALLFAVHPIH). Over 158 to 160 (TEA) the chain is Extracellular. The chain crosses the membrane as a helical span at residues 161-181 (VAGIVGRADVLACLLFLLAFL). At 182–197 (SYNRSLDQGCVGGSFP) the chain is on the cytoplasmic side. A helical transmembrane segment spans residues 198-218 (STVSPFFLLLSLFLGTCAMLV). Residues 219–221 (KET) are Extracellular-facing. A helical transmembrane segment spans residues 222-238 (GITVFGVCLVYDLFSLS). Over 239 to 313 (NKQDKSSNGA…SPRAVWSMMR (75 aa)) the chain is Cytoplasmic. The disordered stretch occupies residues 246-277 (NGALCPRSPQQPGSPQPSSLPGHPHRENGKQQ). Over residues 251–267 (PRSPQQPGSPQPSSLPG) the composition is skewed to low complexity. Residues 314 to 334 (FLTYSYLLAFNVWLLLAPVTL) traverse the membrane as a helical segment. Residues 335 to 354 (CYDWQVGSIPLVETIWDMRN) are Extracellular-facing. Residues 355–375 (LATIFLAVVMALLSLHCLAAF) form a helical membrane-spanning segment. Residues 376-381 (KRLEHK) are Cytoplasmic-facing. The chain crosses the membrane as a helical span at residues 382 to 402 (EVLVGLLFLVFPFIPASNLFF). A topological domain (extracellular) is located at residue Arg403. Residues 404–424 (VGFVVAERVLYMPSMGYCILF) traverse the membrane as a helical segment. Topologically, residues 425 to 438 (VHGLSKLCTWLNRC) are cytoplasmic. Residues 439-459 (GATTLIVSTVLLLLLFSWKTV) traverse the membrane as a helical segment. The Extracellular segment spans residues 460-882 (KQNEIWLSRE…LQEVREKDQT (423 aa)). TPR repeat units follow at residues 483–516 (AKVH…YPRH), 517–547 (ASAL…HPQH), 548–581 (NRAL…GPEF), 582–615 (ADAY…CPDS), 616–649 (SDLH…SPSH), 650–682 (HVAM…VAHK), 683–716 (AEIL…QPSQ), 751–784 (LECY…KPKD), 789–822 (SELF…NPDQ), and 823–856 (AQAW…VPDS).

The protein belongs to the TMTC family. May interact with FAM168B.

It localises to the membrane. The protein localises to the endoplasmic reticulum. The enzyme catalyses a di-trans,poly-cis-dolichyl beta-D-mannosyl phosphate + L-seryl-[protein] = 3-O-(alpha-D-mannosyl)-L-seryl-[protein] + a di-trans,poly-cis-dolichyl phosphate + H(+). It carries out the reaction a di-trans,poly-cis-dolichyl beta-D-mannosyl phosphate + L-threonyl-[protein] = 3-O-(alpha-D-mannosyl)-L-threonyl-[protein] + a di-trans,poly-cis-dolichyl phosphate + H(+). The protein operates within protein modification; protein glycosylation. In terms of biological role, transfers mannosyl residues to the hydroxyl group of serine or threonine residues. The 4 members of the TMTC family are O-mannosyl-transferases dedicated primarily to the cadherin superfamily, each member seems to have a distinct role in decorating the cadherin domains with O-linked mannose glycans at specific regions. Also acts as O-mannosyl-transferase on other proteins such as PDIA3. This Homo sapiens (Human) protein is Protein O-mannosyl-transferase TMTC1.